The primary structure comprises 167 residues: Protein-export protein SecB (167 aa).

The protein belongs to the SecB family. As to quaternary structure, homotetramer, a dimer of dimers. One homotetramer interacts with 1 SecA dimer.

The protein resides in the cytoplasm. One of the proteins required for the normal export of preproteins out of the cell cytoplasm. It is a molecular chaperone that binds to a subset of precursor proteins, maintaining them in a translocation-competent state. It also specifically binds to its receptor SecA. This is Protein-export protein SecB from Idiomarina loihiensis (strain ATCC BAA-735 / DSM 15497 / L2-TR).